A 107-amino-acid chain; its full sequence is Nucleoid-associated protein RT0857 (107 aa).

Belongs to the YbaB/EbfC family. As to quaternary structure, homodimer.

Its subcellular location is the cytoplasm. The protein localises to the nucleoid. In terms of biological role, binds to DNA and alters its conformation. May be involved in regulation of gene expression, nucleoid organization and DNA protection. The chain is Nucleoid-associated protein RT0857 from Rickettsia typhi (strain ATCC VR-144 / Wilmington).